A 493-amino-acid polypeptide reads, in one-letter code: Lysine--tRNA ligase (493 aa).

Positions 26-34 (PSGHIHLGN) match the 'HIGH' region motif. The 'KMSKS' region motif lies at 270 to 274 (AMKSS).

It belongs to the class-I aminoacyl-tRNA synthetase family.

The protein localises to the cytoplasm. The enzyme catalyses tRNA(Lys) + L-lysine + ATP = L-lysyl-tRNA(Lys) + AMP + diphosphate. In Archaeoglobus fulgidus (strain ATCC 49558 / DSM 4304 / JCM 9628 / NBRC 100126 / VC-16), this protein is Lysine--tRNA ligase (lysS).